We begin with the raw amino-acid sequence, 839 residues long: Protein translocase subunit SecA (839 aa).

ATP-binding positions include Q85, G103–T107, and D492. A disordered region spans residues E794–N820. 4 residues coordinate Zn(2+): C823, C825, C834, and C835.

This sequence belongs to the SecA family. As to quaternary structure, monomer and homodimer. Part of the essential Sec protein translocation apparatus which comprises SecA, SecYEG and auxiliary proteins SecDF. Other proteins may also be involved. The cofactor is Zn(2+).

It localises to the cell membrane. It is found in the cytoplasm. It carries out the reaction ATP + H2O + cellular proteinSide 1 = ADP + phosphate + cellular proteinSide 2.. Part of the Sec protein translocase complex. Interacts with the SecYEG preprotein conducting channel. Has a central role in coupling the hydrolysis of ATP to the transfer of proteins into and across the cell membrane, serving as an ATP-driven molecular motor driving the stepwise translocation of polypeptide chains across the membrane. The polypeptide is Protein translocase subunit SecA (Clostridium acetobutylicum (strain ATCC 824 / DSM 792 / JCM 1419 / IAM 19013 / LMG 5710 / NBRC 13948 / NRRL B-527 / VKM B-1787 / 2291 / W)).